A 176-amino-acid polypeptide reads, in one-letter code: Conjugal transfer protein TraF (176 aa).

The signal sequence occupies residues Met1–Ala23.

Belongs to the peptidase S26C family.

The protein resides in the periplasm. Involved in conjugal transfer of the plasmid. The protein is Conjugal transfer protein TraF (traF) of Agrobacterium tumefaciens (strain 15955).